An 815-amino-acid polypeptide reads, in one-letter code: Kinesin heavy chain (815 aa).

One can recognise a Kinesin motor domain in the interval 11–329; sequence GVQVFCRIRP…LLFGARAKTI (319 aa). 88-95 is a binding site for ATP; that stretch reads GQTSSGKT. Coiled-coil stretches lie at residues 335–374, 422–554, and 695–785; these read INEE…RWRA, PITD…LDEC, and PAQK…RMNA. Residues 788–815 are disordered; sequence IVKPIRPGQVYTSPSAGMSQGAPNGSNA. Residues 797 to 815 are compositionally biased toward polar residues; it reads VYTSPSAGMSQGAPNGSNA.

This sequence belongs to the TRAFAC class myosin-kinesin ATPase superfamily. Kinesin family. Kinesin subfamily. In terms of assembly, oligomer composed of two heavy chains and two light chains.

Its subcellular location is the cytoplasm. The protein localises to the cytoskeleton. Microtubule-dependent motor protein required for organelle transport. Plays a role in endosome transport. Required for the transport of mitochondria along the axon of motor neurons. Involved in the nuclear migration of hyp7 hypodermal precursor cells. Required for the formation of dendritic branches of PVD sensory neurons. In non-ciliated neurons such as the PVD and PHC neurons, required for the organization of minus-end out microtubules in dendrites. Also required for the minus-end out orientation of microtubules in dendrites of AQR gas-sensing neurons. Involved in the localization of unc-33 to neurites. Positively regulates cilium position and dendrite morphogenesis in the postembryonic AQR and PQR gas-sensing neurons. Plays a more prominent role in regulating dendrite morphogenesis in AQR than in PQR neurons. Plays a role in regulating the localization of grdn-1 to the distal dendrites of AQR sensory neurons. The sequence is that of Kinesin heavy chain from Caenorhabditis elegans.